A 339-amino-acid chain; its full sequence is Proto-oncogene serine/threonine-protein kinase mos (339 aa).

The Protein kinase domain occupies 61 to 335; that stretch reads VCLLHRLGSG…LLQKDLKAFR (275 aa). ATP is bound by residues 67 to 75 and K88; that span reads LGSGGFGSV. The active-site Proton acceptor is D196.

The protein belongs to the protein kinase superfamily. Ser/Thr protein kinase family. Interacts with MAP2K1/MEK1. Expressed mainly in gonadal tissues, and cardiac and skeletal muscles.

It localises to the cytoplasm. The catalysed reaction is L-seryl-[protein] + ATP = O-phospho-L-seryl-[protein] + ADP + H(+). The enzyme catalyses L-threonyl-[protein] + ATP = O-phospho-L-threonyl-[protein] + ADP + H(+). Its function is as follows. Serine/threonine kinase involved in the regulation of MAPK signaling. Is an activator of the ERK1/2 signaling cascade playing an essential role in the stimulation of oocyte maturation. In Rattus norvegicus (Rat), this protein is Proto-oncogene serine/threonine-protein kinase mos.